A 265-amino-acid polypeptide reads, in one-letter code: Asparagine-rich protein (265 aa).

An N-terminal signal peptide occupies residues 1 to 21 (MSRLTLLVLLVIAAVIQKVHG). 2 disordered regions span residues 20–71 (HGQG…NRNI) and 88–183 (SNQN…NQQY). Composition is skewed to basic and acidic residues over residues 22 to 35 (QGRE…HEPG) and 44 to 55 (EKTERNLREPNR). Over residues 88–98 (SNQNNFGNNRS) the composition is skewed to low complexity. Positions 115–124 (NKSEVEKENG) are enriched in basic and acidic residues. Over residues 152–166 (KVQHRIAKRFQKRHP) the composition is skewed to basic residues.

Nacreous layer of shell (at protein level). Expressed primarily in the mantle with highest level in the mantle pallium and lower level in the mantle edge.

The protein localises to the secreted. This is Asparagine-rich protein from Pinctada maxima (Silver-lipped pearl oyster).